A 129-amino-acid chain; its full sequence is Nif-specific regulatory protein (129 aa).

The Sigma-54 factor interaction domain maps to 1–46; the sequence is EFLLTKIGRQQGRPLTVTDSAIRLLMSHRWPGNVRDVENCLERSAI. Positions 101 to 129 form a DNA-binding region, H-T-H motif; it reads QAKAARLLGMTPRQIAYRIQTLNIHMRKI.

Interacts with sigma-54.

In terms of biological role, required for activation of most nif operons, which are directly involved in nitrogen fixation. This Azotobacter chroococcum mcd 1 protein is Nif-specific regulatory protein (nifA).